Reading from the N-terminus, the 270-residue chain is Regulator of G-protein signaling rgs-10 (270 aa).

Positions 135-252 (SPETLAASEY…LEDPLYLDLV (118 aa)) constitute an RGS domain.

Functionally, shown to have a role in viability and embryogenesis. This chain is Regulator of G-protein signaling rgs-10 (rgs-10), found in Caenorhabditis elegans.